A 236-amino-acid polypeptide reads, in one-letter code: Orotidine 5'-phosphate decarboxylase (236 aa).

Substrate is bound by residues Asp-16, Lys-38, 65–74, Thr-123, Arg-184, Gln-193, Gly-213, and Arg-214; that span reads DLKLHDIGNT. Residue Lys-67 is the Proton donor of the active site.

The protein belongs to the OMP decarboxylase family. Type 1 subfamily. In terms of assembly, homodimer.

The catalysed reaction is orotidine 5'-phosphate + H(+) = UMP + CO2. It functions in the pathway pyrimidine metabolism; UMP biosynthesis via de novo pathway; UMP from orotate: step 2/2. Functionally, catalyzes the decarboxylation of orotidine 5'-monophosphate (OMP) to uridine 5'-monophosphate (UMP). The polypeptide is Orotidine 5'-phosphate decarboxylase (Methylobacterium nodulans (strain LMG 21967 / CNCM I-2342 / ORS 2060)).